The primary structure comprises 378 residues: Chitinase (378 aa).

A signal peptide spans 1-28; it reads MNFTVKYSFLVICLLCCLLSTYVSVIEG. Residues 53-378 form the GH18 domain; that stretch reads GIIQGYYPSW…AIEYFVESLH (326 aa). Glu-174 acts as the Proton donor in catalysis. An intrachain disulfide couples Cys-220 to Cys-230.

This sequence belongs to the glycosyl hydrolase 18 family. As to quaternary structure, forms a hetero-multimeric, high molecular weight complex composed of at least CHT1, SOAP AND WARP. Within the complex, may interact with WARP via a disulfide bond.

The protein localises to the secreted. It localises to the cytoplasmic vesicle. Its subcellular location is the secretory vesicle. The protein resides in the microneme. The enzyme catalyses Random endo-hydrolysis of N-acetyl-beta-D-glucosaminide (1-&gt;4)-beta-linkages in chitin and chitodextrins.. Its activity is regulated as follows. Inhibited by allosamidin. Endochitinase that cleaves beta-1,4-linkages between tri- and tetramers of N-acetylglucosamine (GlcNAc) from penta- and hexameric chitin oligomers. Does not cleave smaller chitin oligosaccharides. Required to cross the acellular, chitin-containing peritrophic matrix (PM) which is formed around the ingested blood meal in the mosquito midgut allowing the ookinete to invade the mosquito gut epithelium. This is Chitinase from Plasmodium falciparum (isolate 3D7).